We begin with the raw amino-acid sequence, 413 residues long: N5-carboxyaminoimidazole ribonucleotide synthase (413 aa).

Residues 1 to 21 are disordered; sequence MKRVSEQAGNPDGNPQAHVPG. Residues Lys-122, Lys-162, 199-202, Glu-207, and 289-290 each bind ATP; these read EEKV and NE. Residues 126 to 319 enclose the ATP-grasp domain; that stretch reads RERLAELGAP…QFEQHLRAVM (194 aa).

Belongs to the PurK/PurT family. In terms of assembly, homodimer.

It carries out the reaction 5-amino-1-(5-phospho-beta-D-ribosyl)imidazole + hydrogencarbonate + ATP = 5-carboxyamino-1-(5-phospho-D-ribosyl)imidazole + ADP + phosphate + 2 H(+). Its pathway is purine metabolism; IMP biosynthesis via de novo pathway; 5-amino-1-(5-phospho-D-ribosyl)imidazole-4-carboxylate from 5-amino-1-(5-phospho-D-ribosyl)imidazole (N5-CAIR route): step 1/2. Catalyzes the ATP-dependent conversion of 5-aminoimidazole ribonucleotide (AIR) and HCO(3)(-) to N5-carboxyaminoimidazole ribonucleotide (N5-CAIR). The sequence is that of N5-carboxyaminoimidazole ribonucleotide synthase from Corynebacterium ammoniagenes (Brevibacterium ammoniagenes).